A 152-amino-acid chain; its full sequence is Protein Turandot X (152 aa).

The N-terminal stretch at 1-22 is a signal peptide; that stretch reads MGFYISSLLICVFLGIVRFASA.

It belongs to the Turandot family.

The protein resides in the secreted. Functionally, a humoral factor that may play a role in stress tolerance. The polypeptide is Protein Turandot X (Drosophila erecta (Fruit fly)).